A 227-amino-acid polypeptide reads, in one-letter code: Cytochrome c oxidase subunit 2 (227 aa).

Residues 1–14 are Mitochondrial intermembrane-facing; that stretch reads MAYPYELGFQDASS. Residues 15–45 form a helical membrane-spanning segment; it reads PIMEELLHFHDHTLMIVFLISTLVLYLITIM. Topologically, residues 46-59 are mitochondrial matrix; it reads LTTKLTHTSTMDAQ. A helical membrane pass occupies residues 60 to 87; it reads EIETIWTILPAIILILIALPSLRILYMM. Residues 88-227 lie on the Mitochondrial intermembrane side of the membrane; that stretch reads DEINSPSLTV…DFEIWSSSML (140 aa). Residues His-161, Cys-196, Glu-198, Cys-200, His-204, and Met-207 each coordinate Cu cation. Mg(2+) is bound at residue Glu-198.

Belongs to the cytochrome c oxidase subunit 2 family. Component of the cytochrome c oxidase (complex IV, CIV), a multisubunit enzyme composed of 14 subunits. The complex is composed of a catalytic core of 3 subunits MT-CO1, MT-CO2 and MT-CO3, encoded in the mitochondrial DNA, and 11 supernumerary subunits COX4I, COX5A, COX5B, COX6A, COX6B, COX6C, COX7A, COX7B, COX7C, COX8 and NDUFA4, which are encoded in the nuclear genome. The complex exists as a monomer or a dimer and forms supercomplexes (SCs) in the inner mitochondrial membrane with NADH-ubiquinone oxidoreductase (complex I, CI) and ubiquinol-cytochrome c oxidoreductase (cytochrome b-c1 complex, complex III, CIII), resulting in different assemblies (supercomplex SCI(1)III(2)IV(1) and megacomplex MCI(2)III(2)IV(2)). Found in a complex with TMEM177, COA6, COX18, COX20, SCO1 and SCO2. Interacts with TMEM177 in a COX20-dependent manner. Interacts with COX20. Interacts with COX16. It depends on Cu cation as a cofactor.

It is found in the mitochondrion inner membrane. The catalysed reaction is 4 Fe(II)-[cytochrome c] + O2 + 8 H(+)(in) = 4 Fe(III)-[cytochrome c] + 2 H2O + 4 H(+)(out). Functionally, component of the cytochrome c oxidase, the last enzyme in the mitochondrial electron transport chain which drives oxidative phosphorylation. The respiratory chain contains 3 multisubunit complexes succinate dehydrogenase (complex II, CII), ubiquinol-cytochrome c oxidoreductase (cytochrome b-c1 complex, complex III, CIII) and cytochrome c oxidase (complex IV, CIV), that cooperate to transfer electrons derived from NADH and succinate to molecular oxygen, creating an electrochemical gradient over the inner membrane that drives transmembrane transport and the ATP synthase. Cytochrome c oxidase is the component of the respiratory chain that catalyzes the reduction of oxygen to water. Electrons originating from reduced cytochrome c in the intermembrane space (IMS) are transferred via the dinuclear copper A center (CU(A)) of subunit 2 and heme A of subunit 1 to the active site in subunit 1, a binuclear center (BNC) formed by heme A3 and copper B (CU(B)). The BNC reduces molecular oxygen to 2 water molecules using 4 electrons from cytochrome c in the IMS and 4 protons from the mitochondrial matrix. This is Cytochrome c oxidase subunit 2 (MT-CO2) from Cavia aperea (Brazilian guinea pig).